The sequence spans 382 residues: S-adenosylmethionine synthase (382 aa).

His15 lines the ATP pocket. Asp17 lines the Mg(2+) pocket. Glu43 contacts K(+). 2 residues coordinate L-methionine: Glu56 and Gln99. Residues 99–109 (QSPDINQGVDR) are flexible loop. ATP is bound by residues 164–166 (DAK), 230–231 (RF), Asp239, 245–246 (RK), Ala262, and Lys266. Asp239 is an L-methionine binding site. Lys270 contributes to the L-methionine binding site.

Belongs to the AdoMet synthase family. In terms of assembly, homotetramer; dimer of dimers. It depends on Mg(2+) as a cofactor. K(+) serves as cofactor.

It localises to the cytoplasm. The catalysed reaction is L-methionine + ATP + H2O = S-adenosyl-L-methionine + phosphate + diphosphate. Its pathway is amino-acid biosynthesis; S-adenosyl-L-methionine biosynthesis; S-adenosyl-L-methionine from L-methionine: step 1/1. Functionally, catalyzes the formation of S-adenosylmethionine (AdoMet) from methionine and ATP. The overall synthetic reaction is composed of two sequential steps, AdoMet formation and the subsequent tripolyphosphate hydrolysis which occurs prior to release of AdoMet from the enzyme. This is S-adenosylmethionine synthase from Glaesserella parasuis serovar 5 (strain SH0165) (Haemophilus parasuis).